Here is a 150-residue protein sequence, read N- to C-terminus: Copper transporter 3 (150 aa).

A run of 2 helical transmembrane segments spans residues 50–70 (GGMYALALAAVFALAVLLEFL) and 100–120 (LAYLLMLALMSFNVGVLLAAV).

The protein belongs to the copper transporter (Ctr) (TC 1.A.56) family. SLC31A subfamily.

The protein localises to the membrane. Its function is as follows. Involved in the transport of copper. The polypeptide is Copper transporter 3 (COPT3) (Oryza sativa subsp. japonica (Rice)).